A 225-amino-acid chain; its full sequence is Enolase-phosphatase E1 (225 aa).

Belongs to the HAD-like hydrolase superfamily. MasA/MtnC family. In terms of assembly, monomer. Mg(2+) serves as cofactor.

It carries out the reaction 5-methylsulfanyl-2,3-dioxopentyl phosphate + H2O = 1,2-dihydroxy-5-(methylsulfanyl)pent-1-en-3-one + phosphate. It functions in the pathway amino-acid biosynthesis; L-methionine biosynthesis via salvage pathway; L-methionine from S-methyl-5-thio-alpha-D-ribose 1-phosphate: step 3/6. It participates in amino-acid biosynthesis; L-methionine biosynthesis via salvage pathway; L-methionine from S-methyl-5-thio-alpha-D-ribose 1-phosphate: step 4/6. In terms of biological role, bifunctional enzyme that catalyzes the enolization of 2,3-diketo-5-methylthiopentyl-1-phosphate (DK-MTP-1-P) into the intermediate 2-hydroxy-3-keto-5-methylthiopentenyl-1-phosphate (HK-MTPenyl-1-P), which is then dephosphorylated to form the acireductone 1,2-dihydroxy-3-keto-5-methylthiopentene (DHK-MTPene). The polypeptide is Enolase-phosphatase E1 (Pseudomonas aeruginosa (strain UCBPP-PA14)).